A 651-amino-acid chain; its full sequence is Bromodomain-containing protein 7 (651 aa).

2 disordered regions span residues 36–133 and 257–298; these read ELST…EVEQ and KDKV…KKKD. The segment covering 58 to 69 has biased composition (basic residues); the sequence is HKDRKRKKRKKG. Positions 65–96 match the Nuclear localization signal motif; that stretch reads KRKKGEKQVPGEEKEKRKRKVKEDKRKRDREH. Over residues 70-105 the composition is skewed to basic and acidic residues; it reads EKQVPGEEKEKRKRKVKEDKRKRDREHPDSEGEQEL. The Bromo domain maps to 131-235; that stretch reads VEQTPLQEAL…HSGMKILSQE (105 aa). Over residues 271–298 the composition is skewed to basic and acidic residues; it reads GSGKDKGEPVDGDTKAFKTPNKEHKKKD. Residues 533–564 adopt a coiled-coil conformation; it reads SEEAEIFQRKLDETTKLLRELQDAQNERLSTK.

Its subcellular location is the nucleus. The protein resides in the chromosome. In terms of biological role, acts both as coactivator and as corepressor. May play a role in chromatin remodeling. Participates in the Wnt signaling pathway. Transcriptional corepressor that down-regulates the expression of target genes. Binds to target promoters, leading to increased histone H3 acetylation. Coactivator for TP53-mediated activation of transcription of a set of target genes. Required for TP53-mediated cell-cycle arrest in response to oncogene activation. Inhibits cell cycle progression from G1 to S phase. The sequence is that of Bromodomain-containing protein 7 (BRD7) from Gallus gallus (Chicken).